The chain runs to 396 residues: Ribosomal RNA large subunit methyltransferase I (396 aa).

Residues 2-81 (SVRLVLAKGR…ESIDIAFFSR (80 aa)) form the PUA domain.

It belongs to the methyltransferase superfamily. RlmI family.

It is found in the cytoplasm. It catalyses the reaction cytidine(1962) in 23S rRNA + S-adenosyl-L-methionine = 5-methylcytidine(1962) in 23S rRNA + S-adenosyl-L-homocysteine + H(+). Its function is as follows. Specifically methylates the cytosine at position 1962 (m5C1962) of 23S rRNA. This chain is Ribosomal RNA large subunit methyltransferase I, found in Shigella boydii serotype 4 (strain Sb227).